The primary structure comprises 73 residues: MQMKYLIPIFFLVLIVADHCHAFLGMIPGLIGGLISAFKGRRKRDITSQIEQYRNLQKREAELEDILANLPVY.

A signal peptide spans methionine 1–alanine 22. A propeptide spanning residues aspartate 45–tyrosine 73 is cleaved from the precursor.

Belongs to the non-disulfide-bridged peptide (NDBP) superfamily. Short antimicrobial peptide (group 4) family. As to expression, expressed by the venom gland.

The protein localises to the secreted. Antimicrobial peptide. Has a high antibacterial activity against the Gram-positive bacterium S.aureus (MIC=5-17.30 uM), the methicillin-resistant S.aureus (MRSA) (MIC=17.30 uM), and E.faecalis (MIC=69.23 uM). Has antifungal activity against Candida spp. and one Cryptococcus neoformans strains with MICs values ranging from 6.25 to 100 uM. Also shows an inhibitory activity on C.albicans biofilms at high concentrations. Has a moderate hemolytic potency (18% at 20 uM). Also inhibits the growth of the five cancer cell lines tested. In the model of polymicrobial sepsis, it exhibits an antibiotic effect, reducing the levels of microorganisms in the infectious focus and the inflammatory responses in the lung and cecum of septic animals. The polypeptide is Putative antimicrobial peptide clone 4 (Tityus costatus (Brazilian scorpion)).